The sequence spans 168 residues: Endoribonuclease YbeY (168 aa).

Positions 119, 123, and 129 each coordinate Zn(2+).

The protein belongs to the endoribonuclease YbeY family. Zn(2+) is required as a cofactor.

It localises to the cytoplasm. Functionally, single strand-specific metallo-endoribonuclease involved in late-stage 70S ribosome quality control and in maturation of the 3' terminus of the 16S rRNA. The sequence is that of Endoribonuclease YbeY from Gluconobacter oxydans (strain 621H) (Gluconobacter suboxydans).